Consider the following 331-residue polypeptide: Centriolar satellite-associated tubulin polyglutamylase complex regulator 1 (331 aa).

The segment at Met1–Asp111 is required for interaction with PCM1. The required for interaction with TPGS1, LRRC49, and TTLL1 stretch occupies residues Met1–Glu225. Residues Phe112–Thr331 are required for interaction with TPGS2. Residues Ser292–Thr331 form a disordered region. Residues Glu318–Thr331 are compositionally biased toward acidic residues. Ser319 is modified (phosphoserine).

Belongs to the CSTPP1 family. As to quaternary structure, interacts with PCM1. Interacts with TTLL1, TPGS1, TPGS2 and LRRC49; the interactions link CSTPP1 to the complex TPGC. Binds to alpha-tubulin.

It is found in the cytoplasm. The protein localises to the cytoskeleton. Its subcellular location is the microtubule organizing center. The protein resides in the centrosome. It localises to the centriolar satellite. Functionally, regulator of the tubulin polyglutamylase complex (TPGC) that controls cytoskeletal organization, nuclear shape, and cilium disassembly by balancing microtubule and actin assembly. Regulates the assembly and stability of the TPGC and thereby modulates polyglutamylation of the microtubule, which antagonizes MAP4 binding. This is Centriolar satellite-associated tubulin polyglutamylase complex regulator 1 (Cstpp1) from Rattus norvegicus (Rat).